The following is a 497-amino-acid chain: Mechanosensitive ion channel protein 1, mitochondrial (497 aa).

The N-terminal 86 residues, 1–86, are a transit peptide targeting the mitochondrion; sequence MAGVRLSLLK…RAFSSKSDDF (86 aa). Transmembrane regions (helical) follow at residues 152 to 172, 216 to 236, 238 to 258, 280 to 300, and 305 to 325; these read DVIV…VVMP, LVTF…TIAA, YFSP…LYRW, VLTL…MASA, and VAVQ…AFAA.

The protein belongs to the MscS (TC 1.A.23) family.

It localises to the mitochondrion membrane. Mechanosensitive channel that opens in response to stretch forces in the membrane lipid bilayer. This is Mechanosensitive ion channel protein 1, mitochondrial (MSL1) from Arabidopsis thaliana (Mouse-ear cress).